The following is a 443-amino-acid chain: Differentially expressed in FDCP 8 homolog B (443 aa).

Positions 14–49 (HLNPFDKKGGAERHPADSETQPCKDSSTSSPLSVPE) are disordered. The span at 17–30 (PFDKKGGAERHPAD) shows a compositional bias: basic and acidic residues. The segment covering 31 to 45 (SETQPCKDSSTSSPL) has biased composition (polar residues). 2 Phorbol-ester/DAG-type zinc fingers span residues 134-185 (EHRF…TKPC) and 364-424 (IHTT…STSC).

It belongs to the DEF8 family.

In terms of biological role, positively regulates lysosome peripheral distribution and ruffled border formation in osteoclasts. Involved in bone resorption. This is Differentially expressed in FDCP 8 homolog B (def8-b) from Xenopus laevis (African clawed frog).